A 131-amino-acid chain; its full sequence is Phosphomevalonate dehydratase small subunit (131 aa).

The active-site Proton acceptor is the Ser62.

Belongs to the AcnX type II small subunit family. In terms of assembly, heterodimer composed of a large subunit (PMDh-L) and a small subunit (PMDh-S).

It catalyses the reaction (R)-5-phosphomevalonate = (2E)-3-methyl-5-phosphooxypent-2-enoate + H2O. It functions in the pathway isoprenoid biosynthesis; isopentenyl diphosphate biosynthesis via mevalonate pathway. Its function is as follows. Component of a hydro-lyase that catalyzes the dehydration of mevalonate 5-phosphate (MVA5P) to form trans-anhydromevalonate 5-phosphate (tAHMP). Involved in the archaeal mevalonate (MVA) pathway, which provides fundamental precursors for isoprenoid biosynthesis, such as isopentenyl diphosphate (IPP) and dimethylallyl diphosphate (DMAPP). The chain is Phosphomevalonate dehydratase small subunit from Thermococcus gammatolerans (strain DSM 15229 / JCM 11827 / EJ3).